Reading from the N-terminus, the 394-residue chain is Protein-glutamate methylesterase/protein-glutamine glutaminase 2 (394 aa).

Positions 4-121 (KVLVVDDSSF…ARNRDEAISL (118 aa)) constitute a Response regulatory domain. A 4-aspartylphosphate modification is found at D55. A CheB-type methylesterase domain is found at 202-394 (SGKKYQLMAI…AERILVEVGR (193 aa)). Catalysis depends on residues S214, H241, and D337.

This sequence belongs to the CheB family. Post-translationally, phosphorylated by CheA. Phosphorylation of the N-terminal regulatory domain activates the methylesterase activity.

It is found in the cytoplasm. The enzyme catalyses [protein]-L-glutamate 5-O-methyl ester + H2O = L-glutamyl-[protein] + methanol + H(+). It carries out the reaction L-glutaminyl-[protein] + H2O = L-glutamyl-[protein] + NH4(+). Functionally, involved in chemotaxis. Part of a chemotaxis signal transduction system that modulates chemotaxis in response to various stimuli. Catalyzes the demethylation of specific methylglutamate residues introduced into the chemoreceptors (methyl-accepting chemotaxis proteins or MCP) by CheR. Also mediates the irreversible deamidation of specific glutamine residues to glutamic acid. The protein is Protein-glutamate methylesterase/protein-glutamine glutaminase 2 of Photobacterium profundum (strain SS9).